The chain runs to 396 residues: Probable sugar efflux transporter (396 aa).

12 helical membrane passes run 15–35 (VVTLAVAAFIFNTTEFVPVGL), 50–70 (VGIMLTIYAWVVALMSLPFML), 81–101 (LICLFVVFIASHVLSFLSWSF), 103–123 (VLVISRIGVAFAHAIFWSITA), 136–156 (AQALSLIATGTALAMVLGLPL), 170–190 (FFAIGIGALITLLCLIKLLPL), 209–229 (PALMSIYLLTVVVVTAHYTAY), 246–266 (FATALLLLLGGAGIIGSVIFG), 275–295 (ALVSTAIALLLVCLALLLPAA), 299–319 (IHLGVLSIFWGIAMMIIGLGM), 333–353 (VAMALFSGIFNIGIGAGALVG), and 364–384 (MIGYVGTVPAFAALIWSIIIF).

Belongs to the major facilitator superfamily. SotB (TC 2.A.1.2) family.

Its subcellular location is the cell inner membrane. In terms of biological role, involved in the efflux of sugars. The physiological role may be the reduction of the intracellular concentration of toxic sugars or sugar metabolites. The polypeptide is Probable sugar efflux transporter (Escherichia coli O157:H7 (strain EC4115 / EHEC)).